A 389-amino-acid polypeptide reads, in one-letter code: 3-ketoacyl-CoA thiolase (389 aa).

Cysteine 91 (acyl-thioester intermediate) is an active-site residue. Catalysis depends on proton acceptor residues histidine 343 and cysteine 373.

This sequence belongs to the thiolase-like superfamily. Thiolase family. Heterotetramer of two alpha chains (FadB) and two beta chains (FadA).

It localises to the cytoplasm. The enzyme catalyses an acyl-CoA + acetyl-CoA = a 3-oxoacyl-CoA + CoA. It participates in lipid metabolism; fatty acid beta-oxidation. Its function is as follows. Catalyzes the final step of fatty acid oxidation in which acetyl-CoA is released and the CoA ester of a fatty acid two carbons shorter is formed. The polypeptide is 3-ketoacyl-CoA thiolase (Citrobacter koseri (strain ATCC BAA-895 / CDC 4225-83 / SGSC4696)).